The chain runs to 1049 residues: Toll-like receptor 7 (1049 aa).

The N-terminal stretch at 1–26 (MVFPMWTLKRQILILFNIILISKLLG) is a signal peptide. Residues 27–839 (ARWFPKTLPC…LYTCELDLTN (813 aa)) are Extracellular-facing. 6 LRR repeats span residues 43–64 (PKNH…GGIP), 65–87 (TNTT…SFHR), 110–126 (NMCI…FSGL), 127–149 (TYLK…LPPS), 151–170 (QLLS…NLTE), and 171–195 (LANI…SYSI). 2 N-linked (GlcNAc...) asparagine glycosylation sites follow: asparagine 66 and asparagine 69. An N-linked (GlcNAc...) asparagine glycan is attached at asparagine 167. 2 N-linked (GlcNAc...) asparagine glycosylation sites follow: asparagine 202 and asparagine 215. LRR repeat units follow at residues 203–226 (LTKL…LPST), 228–247 (TELY…DFNN), 248–275 (LNQL…PCKN), 289–312 (LTEL…WFKN), 314–337 (NKLQ…KFLH), 339–368 (LPSL…AFSS), 369–392 (LKSL…NLSP), 396–419 (LQNL…MFKQ), and 421–443 (KRLK…SEVG). N-linked (GlcNAc...) asparagine glycosylation is present at asparagine 361. An N-linked (GlcNAc...) asparagine glycan is attached at asparagine 413. Asparagine 488 is a glycosylation site (N-linked (GlcNAc...) asparagine). LRR repeat units lie at residues 492 to 515 (YKYG…DFQH), 516 to 540 (LSFL…EFQP), 541 to 564 (LAEL…AFEE), and 566 to 588 (HKLE…ITHM). 2 N-linked (GlcNAc...) asparagine glycosylation sites follow: asparagine 523 and asparagine 534. Asparagine 590 is a glycosylation site (N-linked (GlcNAc...) asparagine). LRR repeat units follow at residues 595-618 (LKVL…TMES), 619-644 (ESLR…RYLQ), 649-672 (LLKL…VFDG), 674-697 (PPNL…KLQC), 698-721 (LKNL…LSNC), 723-745 (RSLK…FLQD), 746-769 (AFQL…SFPE), and 772-795 (LNNL…VWFV). 2 N-linked (GlcNAc...) asparagine glycosylation sites follow: asparagine 679 and asparagine 720. Asparagine 799 carries an N-linked (GlcNAc...) asparagine glycan. A helical membrane pass occupies residues 840-860 (LILFSLSISVSLFLMVMMTAS). Over 861 to 1049 (HLYFWDVWYI…AYSQVFKETV (189 aa)) the chain is Cytoplasmic. Positions 889–1033 (CCYDAFIVYD…YFWQCLKNAL (145 aa)) constitute a TIR domain.

This sequence belongs to the Toll-like receptor family. In terms of assembly, homodimer. Interacts with MYD88 via their respective TIR domains. Interacts with UNC93B1. Interacts with SMPDL3B. Detected in brain, placenta, spleen, stomach, small intestine, lung and in plasmacytoid pre-dendritic cells. Expressed in peripheral mononuclear blood cells.

It localises to the endoplasmic reticulum membrane. The protein localises to the endosome. The protein resides in the lysosome. Its subcellular location is the cytoplasmic vesicle. It is found in the phagosome. Its activity is regulated as follows. Activated by guanosine analogs including deoxyguanosine, 7-thia-8-oxoguanosine or 7-deazaguanosine in a RNA-independent manner. Activated by imiquimod. Its function is as follows. Endosomal receptor that plays a key role in innate and adaptive immunity. Controls host immune response against pathogens through recognition of uridine-containing single strand RNAs (ssRNAs) of viral origin or guanosine analogs. Upon binding to agonists, undergoes dimerization that brings TIR domains from the two molecules into direct contact, leading to the recruitment of TIR-containing downstream adapter MYD88 through homotypic interaction. In turn, the Myddosome signaling complex is formed involving IRAK4, IRAK1, TRAF6, TRAF3 leading to activation of downstream transcription factors NF-kappa-B and IRF7 to induce pro-inflammatory cytokines and interferons, respectively. In plasmacytoid dendritic cells, RNASET2 endonuclease cooperates with PLD3 or PLD4 5'-&gt;3' exonucleases to process RNA and release 2',3'-cyclic guanosine monophosphate (2',3'-cGMP) and cytidine-rich RNA fragments that occupy TLR7 ligand-binding pockets and trigger a signaling-competent state. The polypeptide is Toll-like receptor 7 (Homo sapiens (Human)).